The primary structure comprises 279 residues: Undecaprenyl-diphosphatase (279 aa).

7 consecutive transmembrane segments (helical) span residues 10 to 30 (FICF…FLPI), 48 to 68 (LGVS…IYYF), 96 to 116 (LFIY…LIKL), 128 to 148 (GLFS…LSEI), 203 to 223 (SFLV…FSLF), 229 to 249 (IDII…IFAI), and 259 to 279 (NNTL…LTTL).

It belongs to the UppP family.

It is found in the cell inner membrane. It carries out the reaction di-trans,octa-cis-undecaprenyl diphosphate + H2O = di-trans,octa-cis-undecaprenyl phosphate + phosphate + H(+). Catalyzes the dephosphorylation of undecaprenyl diphosphate (UPP). Confers resistance to bacitracin. This is Undecaprenyl-diphosphatase from Prochlorococcus marinus (strain NATL1A).